The primary structure comprises 360 residues: RGG repeats nuclear RNA binding protein B (360 aa).

Disordered regions lie at residues 1–216 (MASV…DKEM) and 250–360 (MQQL…TLGK). At Ala2 the chain carries N-acetylalanine. The span at 58 to 77 (PGGGRGAGRGGSYGRGGRGG) shows a compositional bias: gly residues. 2 stretches are compositionally biased toward basic and acidic residues: residues 99–108 (RRSEEGDGAR) and 132–157 (DSER…RDGA). The span at 162–176 (WGTTQDDITPVTEES) shows a compositional bias: polar residues. Basic and acidic residues-rich tracts occupy residues 184 to 216 (LTVE…DKEM), 258 to 283 (SNND…EKTR), and 311 to 336 (REGR…RNQR). The 66-residue stretch at 223-288 (KVLEEKKKAL…EEKTRKSLSI (66 aa)) folds into the FF domain. At Ser258 the chain carries Phosphoserine.

Belongs to the SERBP1-HABP4 family.

The protein localises to the nucleus. Its subcellular location is the cytoplasm. It localises to the perinuclear region. Functionally, ribosome-binding protein that acts as a regulator of mRNA translation by promoting ribosome inactivation. Binds RNA. The sequence is that of RGG repeats nuclear RNA binding protein B from Arabidopsis thaliana (Mouse-ear cress).